The chain runs to 160 residues: Cytochrome b6-f complex subunit 4 (160 aa).

3 helical membrane passes run 36–56 (LLYI…GLAV), 95–115 (LLGI…PFIE), and 128–148 (IAMA…IGAC).

It belongs to the cytochrome b family. PetD subfamily. The 4 large subunits of the cytochrome b6-f complex are cytochrome b6, subunit IV (17 kDa polypeptide, PetD), cytochrome f and the Rieske protein, while the 4 small subunits are PetG, PetL, PetM and PetN. The complex functions as a dimer.

It localises to the cellular thylakoid membrane. In terms of biological role, component of the cytochrome b6-f complex, which mediates electron transfer between photosystem II (PSII) and photosystem I (PSI), cyclic electron flow around PSI, and state transitions. In Prochlorococcus marinus (strain MIT 9313), this protein is Cytochrome b6-f complex subunit 4.